A 425-amino-acid polypeptide reads, in one-letter code: MRNASGFLKTAGAPLVSATWLPPSPPPAMPMVAAGPQMERVDNGSQGAPQLFLTSALARGVSGVFVWTALLLTGHQIYSHLRSYTVPREQRFVIRLLFIVPIYAFDSWLSLLLLGGHPYYVYFDSVRDCYEAFVIYSFLTLCFQYLGGESAIMAEIRGKPIRSSCFYGTCCLRGMSYSITFLRFCKQATLQFCIVKPVMALITIILQAFDKYHDGDFNIHSGYLYVTLVYNASVSLALYALFLFYFATRDLLRPFEPVLKFLTIKAIIFLSFWQGMLLAILERCGVIPEVQAVDGTRVGAGTLAAGYQNFLICIEMLFASLALRYAFPSQVYSEKKNSPAPPAPMQSISSGLKETISPQDIVQDAIHNFSPAYQQYTQQSTHEAPGPGQGGHPSPSTHPGPASGSGGGKKSRNIEKRMLIPSEDL.

Helical transmembrane passes span L51–L71, L96–G116, F133–M153, T189–F209, V226–F246, F261–L281, and L303–L323. The disordered stretch occupies residues Q375–L425. Low complexity predominate over residues H392–A402.

The protein belongs to the TMEM184 family. As to expression, expressed in vascular cells (at protein level).

The protein localises to the cell membrane. It is found in the cytoplasm. The protein resides in the perinuclear region. Its subcellular location is the early endosome membrane. It localises to the endosome. The protein localises to the cytoplasmic vesicle. It is found in the secretory vesicle membrane. The protein resides in the cytoplasmic vesicle membrane. Its function is as follows. Acts as a heparin receptor in vascular cells. May be involved in vesicle transport in exocrine cells and Sertoli cells. The polypeptide is Transmembrane protein 184A (Tmem184a) (Rattus norvegicus (Rat)).